A 60-amino-acid polypeptide reads, in one-letter code: Toxin C10S2C2 (60 aa).

4 cysteine pairs are disulfide-bonded: cysteine 3–cysteine 22, cysteine 17–cysteine 39, cysteine 41–cysteine 52, and cysteine 53–cysteine 58. The interval 41–48 (CPTAMWPY) is important for binding to L-type calcium channels.

The protein belongs to the three-finger toxin family. Short-chain subfamily. L-type calcium blocker sub-subfamily. In terms of tissue distribution, expressed by the venom gland.

The protein localises to the secreted. Functionally, this specific blocker of the L-type calcium channel (Cav1/CACNA1) is a smooth muscle relaxant and an inhibitor of cardiac contractions. The chain is Toxin C10S2C2 from Dendroaspis angusticeps (Eastern green mamba).